The chain runs to 326 residues: Probable cell division protein WhiA (326 aa).

Residues 275 to 308 constitute a DNA-binding region (H-T-H motif); that stretch reads SLEELGALADPPLTKDAIAGRIRRLLALADKRAR.

The protein belongs to the WhiA family.

Functionally, involved in cell division and chromosome segregation. This Salinispora tropica (strain ATCC BAA-916 / DSM 44818 / JCM 13857 / NBRC 105044 / CNB-440) protein is Probable cell division protein WhiA.